The primary structure comprises 255 residues: Type III pantothenate kinase (255 aa).

ATP is bound at residue 6 to 13 (DIGNTNIV). 107–110 (GSDC) contributes to the substrate binding site. Catalysis depends on D109, which acts as the Proton acceptor. D129 is a binding site for K(+). T132 provides a ligand contact to ATP. A substrate-binding site is contributed by T184.

It belongs to the type III pantothenate kinase family. Homodimer. NH4(+) serves as cofactor. The cofactor is K(+).

Its subcellular location is the cytoplasm. It catalyses the reaction (R)-pantothenate + ATP = (R)-4'-phosphopantothenate + ADP + H(+). It functions in the pathway cofactor biosynthesis; coenzyme A biosynthesis; CoA from (R)-pantothenate: step 1/5. Its function is as follows. Catalyzes the phosphorylation of pantothenate (Pan), the first step in CoA biosynthesis. In Bifidobacterium longum subsp. infantis (strain ATCC 15697 / DSM 20088 / JCM 1222 / NCTC 11817 / S12), this protein is Type III pantothenate kinase.